The following is a 374-amino-acid chain: Chaperone protein DnaJ (374 aa).

A J domain is found at 5 to 70 (DYYEVLGVNR…RKRASYDQFG (66 aa)). The CR-type zinc-finger motif lies at 133–210 (GLSRTIKVPT…CHGQGRQQQT (78 aa)). Zn(2+) is bound by residues Cys-146, Cys-149, Cys-162, Cys-165, Cys-184, Cys-187, Cys-198, and Cys-201. 4 CXXCXGXG motif repeats span residues 146-153 (CKTCNGSG), 162-169 (CPRCNGSG), 184-191 (CSVCRGRG), and 198-205 (CTDCHGQG).

The protein belongs to the DnaJ family. In terms of assembly, homodimer. It depends on Zn(2+) as a cofactor.

It localises to the cytoplasm. Functionally, participates actively in the response to hyperosmotic and heat shock by preventing the aggregation of stress-denatured proteins and by disaggregating proteins, also in an autonomous, DnaK-independent fashion. Unfolded proteins bind initially to DnaJ; upon interaction with the DnaJ-bound protein, DnaK hydrolyzes its bound ATP, resulting in the formation of a stable complex. GrpE releases ADP from DnaK; ATP binding to DnaK triggers the release of the substrate protein, thus completing the reaction cycle. Several rounds of ATP-dependent interactions between DnaJ, DnaK and GrpE are required for fully efficient folding. Also involved, together with DnaK and GrpE, in the DNA replication of plasmids through activation of initiation proteins. This Coxiella burnetii (strain CbuG_Q212) (Coxiella burnetii (strain Q212)) protein is Chaperone protein DnaJ.